Reading from the N-terminus, the 490-residue chain is Glutamyl-tRNA(Gln) amidotransferase subunit A (490 aa).

Catalysis depends on charge relay system residues Lys77 and Ser152. The active-site Acyl-ester intermediate is the Ser176.

Belongs to the amidase family. GatA subfamily. As to quaternary structure, heterotrimer of A, B and C subunits.

The enzyme catalyses L-glutamyl-tRNA(Gln) + L-glutamine + ATP + H2O = L-glutaminyl-tRNA(Gln) + L-glutamate + ADP + phosphate + H(+). In terms of biological role, allows the formation of correctly charged Gln-tRNA(Gln) through the transamidation of misacylated Glu-tRNA(Gln) in organisms which lack glutaminyl-tRNA synthetase. The reaction takes place in the presence of glutamine and ATP through an activated gamma-phospho-Glu-tRNA(Gln). The polypeptide is Glutamyl-tRNA(Gln) amidotransferase subunit A (Limosilactobacillus reuteri (strain DSM 20016) (Lactobacillus reuteri)).